A 334-amino-acid polypeptide reads, in one-letter code: Probable fructose-bisphosphate aldolase class 1 (334 aa).

Belongs to the class I fructose-bisphosphate aldolase family.

The catalysed reaction is beta-D-fructose 1,6-bisphosphate = D-glyceraldehyde 3-phosphate + dihydroxyacetone phosphate. It participates in carbohydrate degradation; glycolysis; D-glyceraldehyde 3-phosphate and glycerone phosphate from D-glucose: step 4/4. This is Probable fructose-bisphosphate aldolase class 1 from Xylella fastidiosa (strain 9a5c).